Here is a 250-residue protein sequence, read N- to C-terminus: MKITPVKALTDNYIWMIQHGNHAVCVDPSEPSPVLEFLVRNRLMLAQTWVTHPHPDHEGGAAALWRGYMESPVYGESDIEAATHTVTAGTRFTFGNGQVTVWATPGHTDRHTSYLLETSDGIHVFCGDTLFSAGCGRVFTGTVEQLYDNFQRFNQLPEGTLFYPAHEYTAANLRFAAHIEPDNADIQTALKAAEHTPTLPVTLAHERRVNPFLRTEIPAVRQRAEALVGKTLNSGLEVFAALRELKNAYR.

H52, H54, D56, H57, H107, D128, and H166 together coordinate Zn(2+).

Belongs to the metallo-beta-lactamase superfamily. Glyoxalase II family. In terms of assembly, monomer. The cofactor is Zn(2+).

It carries out the reaction an S-(2-hydroxyacyl)glutathione + H2O = a 2-hydroxy carboxylate + glutathione + H(+). Its pathway is secondary metabolite metabolism; methylglyoxal degradation; (R)-lactate from methylglyoxal: step 2/2. Its function is as follows. Thiolesterase that catalyzes the hydrolysis of S-D-lactoyl-glutathione to form glutathione and D-lactic acid. The chain is Hydroxyacylglutathione hydrolase from Neisseria gonorrhoeae (strain ATCC 700825 / FA 1090).